The chain runs to 320 residues: Adhesin MafA 3 (320 aa).

Positions 1–18 are cleaved as a signal peptide; it reads MQARLLIPILFSVFILSA. Cysteine 19 carries N-palmitoyl cysteine lipidation. Residue cysteine 19 is the site of S-diacylglycerol cysteine attachment. Positions 288-298 are enriched in polar residues; that stretch reads HTGNSAPSVET. A disordered region spans residues 288–320; sequence HTGNSAPSVETDNSHEGYGYSDEVVRQHRQGQP.

This sequence belongs to the MafA family.

It is found in the cell outer membrane. The chain is Adhesin MafA 3 (mafA3) from Neisseria meningitidis serogroup C / serotype 2a (strain ATCC 700532 / DSM 15464 / FAM18).